A 266-amino-acid polypeptide reads, in one-letter code: Proteasome subunit beta type-7 (266 aa).

A propeptide spanning residues 1 to 33 is cleaved from the precursor; the sequence is MNHDPFSWGRPADSTYGAYNTQIANAGASPMVN.

It belongs to the peptidase T1B family. The 26S proteasome consists of a 20S proteasome core and two 19S regulatory subunits. The 20S proteasome core is composed of 28 subunits that are arranged in four stacked rings, resulting in a barrel-shaped structure. The two end rings are each formed by seven alpha subunits, and the two central rings are each formed by seven beta subunits. The catalytic chamber with the active sites is on the inside of the barrel. Interacts with CIC1.

Its subcellular location is the cytoplasm. The protein localises to the nucleus. In terms of biological role, non-catalytic component of the proteasome which degrades poly-ubiquitinated proteins in the cytoplasm and in the nucleus. It is essential for the regulated turnover of proteins and for the removal of misfolded proteins. The proteasome is a multicatalytic proteinase complex that is characterized by its ability to cleave peptides with Arg, Phe, Tyr, Leu, and Glu adjacent to the leaving group at neutral or slightly basic pH. It has an ATP-dependent proteolytic activity. PRE3 and PRE4 are necessary for the peptidyl-glutamyl-peptide-hydrolyzing activity. This Saccharomyces cerevisiae (strain ATCC 204508 / S288c) (Baker's yeast) protein is Proteasome subunit beta type-7 (PRE4).